A 125-amino-acid chain; its full sequence is Cyclin-dependent protein kinase inhibitor SMR16 (125 aa).

In terms of biological role, probable cyclin-dependent protein kinase (CDK) inhibitor that functions as a repressor of mitosis in the endoreduplication cell cycle. The protein is Cyclin-dependent protein kinase inhibitor SMR16 of Arabidopsis thaliana (Mouse-ear cress).